We begin with the raw amino-acid sequence, 154 residues long: UPF0178 protein YaiI (154 aa).

The protein belongs to the UPF0178 family.

The chain is UPF0178 protein YaiI from Escherichia fergusonii (strain ATCC 35469 / DSM 13698 / CCUG 18766 / IAM 14443 / JCM 21226 / LMG 7866 / NBRC 102419 / NCTC 12128 / CDC 0568-73).